Reading from the N-terminus, the 156-residue chain is 6,7-dimethyl-8-ribityllumazine synthase (156 aa).

5-amino-6-(D-ribitylamino)uracil-binding positions include F28, 62–64 (ALE), and 86–88 (AVI). Residue 91-92 (ET) coordinates (2S)-2-hydroxy-3-oxobutyl phosphate. The active-site Proton donor is the H94. N119 contributes to the 5-amino-6-(D-ribitylamino)uracil binding site. Residue R133 participates in (2S)-2-hydroxy-3-oxobutyl phosphate binding.

The protein belongs to the DMRL synthase family.

The catalysed reaction is (2S)-2-hydroxy-3-oxobutyl phosphate + 5-amino-6-(D-ribitylamino)uracil = 6,7-dimethyl-8-(1-D-ribityl)lumazine + phosphate + 2 H2O + H(+). It functions in the pathway cofactor biosynthesis; riboflavin biosynthesis; riboflavin from 2-hydroxy-3-oxobutyl phosphate and 5-amino-6-(D-ribitylamino)uracil: step 1/2. Its function is as follows. Catalyzes the formation of 6,7-dimethyl-8-ribityllumazine by condensation of 5-amino-6-(D-ribitylamino)uracil with 3,4-dihydroxy-2-butanone 4-phosphate. This is the penultimate step in the biosynthesis of riboflavin. This chain is 6,7-dimethyl-8-ribityllumazine synthase, found in Azoarcus sp. (strain BH72).